The primary structure comprises 189 residues: Nucleoside triphosphate pyrophosphatase (189 aa).

The active-site Proton acceptor is aspartate 70.

This sequence belongs to the Maf family. A divalent metal cation serves as cofactor.

Its subcellular location is the cytoplasm. The catalysed reaction is a ribonucleoside 5'-triphosphate + H2O = a ribonucleoside 5'-phosphate + diphosphate + H(+). The enzyme catalyses a 2'-deoxyribonucleoside 5'-triphosphate + H2O = a 2'-deoxyribonucleoside 5'-phosphate + diphosphate + H(+). Its function is as follows. Nucleoside triphosphate pyrophosphatase. May have a dual role in cell division arrest and in preventing the incorporation of modified nucleotides into cellular nucleic acids. This chain is Nucleoside triphosphate pyrophosphatase, found in Xylella fastidiosa (strain 9a5c).